A 530-amino-acid polypeptide reads, in one-letter code: MLLAALCCLLWSFRTSTGHFPRACASSKSLMEKECCPPWSGDGSPCGQLSGRGACQDIILSNAPFGPQFPFTGVDDRESWPSVFYNRTCQCFGNFMGFNCGNCKFGFWGQNCTEKRLLVRKNIFDLSVPEKNKFLAYLTLAKHTTSPDYVIPTGTYGQMNNGSTPMFNDINIYDLFVWMHYYVSRDTLLGGSEIWKDIDFAHEAPGFLPWHRLFLLLWEQEIQKLTGDENFTIPYWDWRDAKSCDICTDEYMGGRNPANPNLLSPASFFSSWQIVCTRLEEYNSRQALCDGTPEGPLLRNPGNHDKARTPRLPSSADVEFCLSLTQYESDSMDKAANFSFRNTLEGFASPLTGIADASQSSMHNALHIYMNGTMSQVPGSANDPIFLLHHAFVDSIFEQWLRRHHPLREVYPEANAPIGHNRESYMVPFIPLYRNGDLFISSRDLGYDYSNLQESERDIFQDYIKPYLEQASRIWPWLIGAAVVGCVVTAVLGGLTSLLCRRNRKQLHEEKQPLLMEKEDYHSLLYQTHL.

Residues 1–18 (MLLAALCCLLWSFRTSTG) form the signal peptide. Residues 19–473 (HFPRACASSK…IKPYLEQASR (455 aa)) lie on the Lumenal, melanosome side of the membrane. 3 N-linked (GlcNAc...) asparagine glycosylation sites follow: asparagine 86, asparagine 111, and asparagine 161. Cu cation-binding residues include histidine 180, histidine 202, and histidine 211. Residues asparagine 230 and asparagine 337 are each glycosylated (N-linked (GlcNAc...) asparagine). Cu cation contacts are provided by histidine 363 and histidine 367. Residue asparagine 371 is glycosylated (N-linked (GlcNAc...) asparagine). A Cu cation-binding site is contributed by histidine 390. The chain crosses the membrane as a helical span at residues 474 to 494 (IWPWLIGAAVVGCVVTAVLGG). Residues 495–530 (LTSLLCRRNRKQLHEEKQPLLMEKEDYHSLLYQTHL) lie on the Cytoplasmic side of the membrane.

It belongs to the tyrosinase family. In terms of assembly, forms an OPN3-dependent complex with DCT in response to blue light in melanocytes. Cu(2+) serves as cofactor. Post-translationally, glycosylated.

Its subcellular location is the melanosome membrane. It is found in the melanosome. The catalysed reaction is 2 L-dopa + O2 = 2 L-dopaquinone + 2 H2O. It catalyses the reaction L-tyrosine + O2 = L-dopaquinone + H2O. The enzyme catalyses 2 5,6-dihydroxyindole-2-carboxylate + O2 = 2 indole-5,6-quinone-2-carboxylate + 2 H2O. In terms of biological role, this is a copper-containing oxidase that functions in the formation of pigments such as melanins and other polyphenolic compounds. Catalyzes the initial and rate limiting step in the cascade of reactions leading to melanin production from tyrosine. In addition to hydroxylating tyrosine to DOPA (3,4-dihydroxyphenylalanine), also catalyzes the oxidation of DOPA to DOPA-quinone, and possibly the oxidation of DHI (5,6-dihydroxyindole) to indole-5,6 quinone. This Canis lupus familiaris (Dog) protein is Tyrosinase (TYR).